The chain runs to 290 residues: Bifunctional protein FolD (290 aa).

Residues 166-168 (GQS), S191, and I232 contribute to the NADP(+) site.

It belongs to the tetrahydrofolate dehydrogenase/cyclohydrolase family. As to quaternary structure, homodimer.

It catalyses the reaction (6R)-5,10-methylene-5,6,7,8-tetrahydrofolate + NADP(+) = (6R)-5,10-methenyltetrahydrofolate + NADPH. It carries out the reaction (6R)-5,10-methenyltetrahydrofolate + H2O = (6R)-10-formyltetrahydrofolate + H(+). It functions in the pathway one-carbon metabolism; tetrahydrofolate interconversion. Functionally, catalyzes the oxidation of 5,10-methylenetetrahydrofolate to 5,10-methenyltetrahydrofolate and then the hydrolysis of 5,10-methenyltetrahydrofolate to 10-formyltetrahydrofolate. This is Bifunctional protein FolD from Halorhodospira halophila (strain DSM 244 / SL1) (Ectothiorhodospira halophila (strain DSM 244 / SL1)).